Reading from the N-terminus, the 662-residue chain is uncharacterized protein (662 aa).

5 disordered regions span residues 1–94, 107–237, 288–328, 406–440, and 506–580; these read MSQR…NENN, DHNN…VKYH, ETTS…TPSA, QSSFLNKPTNNTETPTTTTTTTTTTTTTPSQPIQM, and QNSI…MVSP. Low complexity predominate over residues 25 to 49; that stretch reads TTTTTPTPTTTTTTTSSLSSSTSST. Basic and acidic residues predominate over residues 77–87; the sequence is DNIKLDNEKTF. Residues 109-161 are compositionally biased toward low complexity; the sequence is NNNNNNNNNNNNNNNNNNNNNNNNNNNNNNNNNNNNNNNNNNNNNNNNNNNNN. Residues 162 to 176 are compositionally biased toward polar residues; that stretch reads DTQKGTNKNENNCTD. Positions 183-196 are enriched in low complexity; that stretch reads STSTTSSSETGSST. The span at 203 to 212 shows a compositional bias: polar residues; sequence KTPQSCLKKS. Positions 213–224 are enriched in low complexity; sequence NNNNNDNNNNNN. Basic residues predominate over residues 226–235; that stretch reads KTPRSTKKVK. Composition is skewed to low complexity over residues 288-308, 413-434, 515-526, and 535-575; these read ETTSVTSTTSTATTTTTTPIP, PTNNTETPTTTTTTTTTTTTTP, PTKSSSSTSIQQ, and NINN…NNNN.

This is an uncharacterized protein from Dictyostelium discoideum (Social amoeba).